We begin with the raw amino-acid sequence, 158 residues long: Transcription elongation factor GreA (158 aa).

Residues 10-75 (TKEGKEKLEQ…QMLENMIRNA (66 aa)) adopt a coiled-coil conformation.

This sequence belongs to the GreA/GreB family.

Necessary for efficient RNA polymerase transcription elongation past template-encoded arresting sites. The arresting sites in DNA have the property of trapping a certain fraction of elongating RNA polymerases that pass through, resulting in locked ternary complexes. Cleavage of the nascent transcript by cleavage factors such as GreA or GreB allows the resumption of elongation from the new 3'terminus. GreA releases sequences of 2 to 3 nucleotides. The polypeptide is Transcription elongation factor GreA (Geobacillus kaustophilus (strain HTA426)).